The sequence spans 364 residues: BTB/POZ and TAZ domain-containing protein 2 (364 aa).

Residues 34–106 (SDVEIVTSDN…LYSSSLTEDE (73 aa)) enclose the BTB domain. A Nuclear localization signal motif is present at residues 203-212 (RKKRRRRHRK). Residues 215-316 (DLYMQLSEAM…PDSCRVPLCR (102 aa)) form a TAZ-type zinc finger. Positions 327-350 (KMGEDTKWKLLVTRVVSAKAMTSL) are caM-binding.

As to quaternary structure, interacts with CUL3A. Interacts with GTE11/BET10 through the BTB domain. In terms of tissue distribution, preferentially expressed in young leaves and roots.

Its subcellular location is the nucleus. It localises to the cytoplasm. The protein operates within protein modification; protein ubiquitination. In terms of biological role, may act as a substrate-specific adapter of an E3 ubiquitin-protein ligase complex (CUL3-RBX1-BTB) which mediates the ubiquitination and subsequent proteasomal degradation of target proteins. Plays a key role as a component of the TAC1-mediated telomerase activation pathway certainly by targeting a telomerase repressor to degradation. Seems to occupy an integral position in a complex signaling network that perceives, integrates, and responds to multiple, and sometimes competing, signals. Enhances responses to auxin in postgermination and vegetative development. Also negatively regulates ABA- and sugar-mediated inhibition of the germination. Essential for female and male gametophyte development. The sequence is that of BTB/POZ and TAZ domain-containing protein 2 (BT2) from Arabidopsis thaliana (Mouse-ear cress).